Reading from the N-terminus, the 824-residue chain is Ras guanine nucleotide exchange factor I (824 aa).

2 disordered regions span residues 1–51 (MSNP…KPTK) and 65–167 (GSNL…LILD). The segment covering 8 to 41 (SNSTNGSSNSLNGESVSPNRLGSSPGSPISKASS) has biased composition (low complexity). A compositionally biased stretch (polar residues) spans 83–95 (NSSVGLLNNSTGS). A compositionally biased stretch (low complexity) spans 104–116 (SSPKSSYILSSSI). The segment covering 117 to 128 (GSGGSGGGGGSS) has biased composition (gly residues). The span at 136–167 (SASNNSSGPRSRSGSLGKNNSSQQNNNNLILD) shows a compositional bias: low complexity. One can recognise a LisH domain in the interval 223 to 255 (GRDNILQLILQHLQFEGLMDSRKILEEEAKIQY). 2 disordered regions span residues 330 to 354 (YVDE…TTAT) and 398 to 425 (NTQQ…STGT). Positions 331–341 (VDEKDNDKPSK) are enriched in basic and acidic residues. A compositionally biased stretch (low complexity) spans 343–354 (SPTTATTTTTAT). Residues 413-425 (LKSTQSITGSTGT) are compositionally biased toward polar residues. The 126-residue stretch at 426 to 551 (LGPQVKAASL…VISDALNSGL (126 aa)) folds into the N-terminal Ras-GEF domain. Residues 585 to 816 (DEEEISRQLT…YTRSMSFEPR (232 aa)) form the Ras-GEF domain.

Functionally, promotes the exchange of Ras-bound GDP by GTP. The chain is Ras guanine nucleotide exchange factor I (gefI) from Dictyostelium discoideum (Social amoeba).